A 343-amino-acid polypeptide reads, in one-letter code: Armadillo repeat-containing protein 10 (343 aa).

Residues 5 to 27 (RGAGWVAAGLLLGAGACYCIYRL) traverse the membrane as a helical segment. The segment at 43–83 (SKSAGALEEGTSEGQLCGRSARPQTGGTWESQWSKTSQPED) is disordered. The residue at position 45 (Ser-45) is a Phosphoserine. A Phosphothreonine modification is found at Glu-50. Over residues 64–82 (RPQTGGTWESQWSKTSQPE) the composition is skewed to polar residues. Thr-85 is modified (phosphothreonine). An ARM repeat occupies 138–180 (GGIPIVANKINHSNQSIKEKALNALNNLSVNVENQIKIKIYIS).

As to quaternary structure, interacts with the DNA-binding domain of p53/TP53. As to expression, expressed in all tissues tested with higher expression in placenta, liver, kidney, heart and brain.

The protein localises to the endoplasmic reticulum membrane. Its subcellular location is the mitochondrion outer membrane. In terms of biological role, may play a role in cell survival and cell growth. May suppress the transcriptional activity of p53/TP53. The chain is Armadillo repeat-containing protein 10 (ARMC10) from Homo sapiens (Human).